A 281-amino-acid chain; its full sequence is Aliphatic sulfonates import ATP-binding protein SsuB (281 aa).

The ABC transporter domain maps to 40–263; sequence LTLRNLRKSF…RRGSADLAAL (224 aa). 72 to 79 contacts ATP; that stretch reads GRSGCGKS.

Belongs to the ABC transporter superfamily. Aliphatic sulfonates importer (TC 3.A.1.17.2) family. As to quaternary structure, the complex is composed of two ATP-binding proteins (SsuB), two transmembrane proteins (SsuC) and a solute-binding protein (SsuA).

The protein localises to the cell inner membrane. It carries out the reaction ATP + H2O + aliphatic sulfonate-[sulfonate-binding protein]Side 1 = ADP + phosphate + aliphatic sulfonateSide 2 + [sulfonate-binding protein]Side 1.. Functionally, part of the ABC transporter complex SsuABC involved in aliphatic sulfonates import. Responsible for energy coupling to the transport system. The chain is Aliphatic sulfonates import ATP-binding protein SsuB from Rhodopseudomonas palustris (strain BisA53).